Consider the following 306-residue polypeptide: Homoserine O-acetyltransferase (306 aa).

The Acyl-thioester intermediate role is filled by cysteine 142. Residues lysine 163 and serine 192 each coordinate substrate. The active-site Proton acceptor is the histidine 235. The active site involves glutamate 237. Arginine 249 serves as a coordination point for substrate.

This sequence belongs to the MetA family.

Its subcellular location is the cytoplasm. It catalyses the reaction L-homoserine + acetyl-CoA = O-acetyl-L-homoserine + CoA. The protein operates within amino-acid biosynthesis; L-methionine biosynthesis via de novo pathway; O-acetyl-L-homoserine from L-homoserine: step 1/1. In terms of biological role, transfers an acetyl group from acetyl-CoA to L-homoserine, forming acetyl-L-homoserine. The sequence is that of Homoserine O-acetyltransferase from Brucella abortus (strain S19).